The primary structure comprises 214 residues: uncharacterized protein (214 aa).

The next 7 helical transmembrane spans lie at 4-23, 35-57, 67-89, 96-118, 128-150, 155-177, and 187-209; these read VSIV…FSSF, SFVH…LGYY, QWMR…FLFT, VSLV…VHVY, ARVM…VSFS, LPLL…SATV, and TVVY…FFAV.

Its subcellular location is the cell membrane. This is an uncharacterized protein from Treponema pallidum (strain Nichols).